A 352-amino-acid chain; its full sequence is Ion-translocating oxidoreductase complex subunit D (352 aa).

The next 4 helical transmembrane spans lie at 20–40 (IMLL…WFFG), 42–62 (GTLV…ALVL), 89–109 (IPPL…VIIA), and 123–143 (PAMI…TSWL). Thr187 carries the FMN phosphoryl threonine modification. The next 5 helical transmembrane spans lie at 214–234 (ILAG…GVWL), 242–262 (WHIP…GWLF), 267–287 (LAAP…FFIL), 301–321 (LIFG…GGYP), and 322–342 (DGVA…DYYT).

The protein belongs to the NqrB/RnfD family. The complex is composed of six subunits: RsxA, RsxB, RsxC, RsxD, RsxE and RsxG. FMN serves as cofactor.

It localises to the cell inner membrane. In terms of biological role, part of a membrane-bound complex that couples electron transfer with translocation of ions across the membrane. Required to maintain the reduced state of SoxR. The chain is Ion-translocating oxidoreductase complex subunit D from Escherichia coli O81 (strain ED1a).